The chain runs to 196 residues: Purpurin (196 aa).

The signal sequence occupies residues Met-1 to Ala-21. 3 disulfide bridges follow: Cys-24/Cys-182, Cys-90/Cys-196, and Cys-142/Cys-151.

The protein belongs to the calycin superfamily. Lipocalin family.

It localises to the secreted. It is found in the extracellular space. Its subcellular location is the extracellular matrix. The protein resides in the interphotoreceptor matrix. Functionally, may be involved in the transport of retinol between the photoreceptors and the pigmented epithelium. The sequence is that of Purpurin from Gallus gallus (Chicken).